The chain runs to 220 residues: MASSAPPVLPISNPQTVPSAAPSSVESQPPIATPAFRNFINQITETVKNGLSKRRPWAELADRSALSKPESISDAAVRIRKNYSYFKVNYLTVATAIVGFSLVTHPFSLVFLLCLLASWLFLYLFRPTDQPIVLFGRTFSDRETLGCLILFSIFVIFLTDVGSVLVSAMMIGVALICAHGAFRAPEDLFLDEQEPAATGFLSFLGGAASSAAPAVIAARV.

Positions 1 to 27 (MASSAPPVLPISNPQTVPSAAPSSVES) are disordered. Residues 12–27 (SNPQTVPSAAPSSVES) show a composition bias toward polar residues. The next 5 helical transmembrane spans lie at 83–103 (YSYF…FSLV), 105–125 (HPFS…LYLF), 146–166 (GCLI…SVLV), 170–190 (MIGV…DLFL), and 196–216 (AATG…PAVI).

Belongs to the PRA1 family. In terms of assembly, interacts with PRA1B1, PRA1B2, PRA1B3, PRA1B5, PRA1B6 and PRA1E. In terms of tissue distribution, expressed in roots, lateral roots, lateral root caps, stomata and trichomes.

It is found in the endosome membrane. May be involved in both secretory and endocytic intracellular trafficking in the endosomal/prevacuolar compartments. The sequence is that of PRA1 family protein B4 (PRA1B4) from Arabidopsis thaliana (Mouse-ear cress).